The following is a 127-amino-acid chain: Small ribosomal subunit protein uS13 (127 aa).

It belongs to the universal ribosomal protein uS13 family. In terms of assembly, part of the 30S ribosomal subunit. Forms a loose heterodimer with protein S19. Forms two bridges to the 50S subunit in the 70S ribosome.

Located at the top of the head of the 30S subunit, it contacts several helices of the 16S rRNA. In the 70S ribosome it contacts the 23S rRNA (bridge B1a) and protein L5 of the 50S subunit (bridge B1b), connecting the 2 subunits; these bridges are implicated in subunit movement. Contacts the tRNAs in the A and P-sites. This chain is Small ribosomal subunit protein uS13, found in Roseiflexus sp. (strain RS-1).